Here is a 331-residue protein sequence, read N- to C-terminus: Tumor necrosis factor receptor superfamily member 6 (331 aa).

Positions 1 to 25 (MLGIWTLLPLVLTSVVRLLSKCVNA) are cleaved as a signal peptide. Topologically, residues 26–171 (QVTDISSKGF…NTKCKEEDSR (146 aa)) are extracellular. TNFR-Cys repeat units lie at residues 47 to 83 (QNLEGLHHEGQFCRNPCPPGERKARDCTVNEDEPDCV), 84 to 127 (PCQE…NTKC), and 128 to 166 (RCKPNFFCNSAVCEHCDPCTKCEHGIIEECTLTSNTKCK). 8 cysteine pairs are disulfide-bonded: Cys-59/Cys-73, Cys-63/Cys-82, Cys-85/Cys-101, Cys-104/Cys-119, Cys-107/Cys-127, Cys-129/Cys-143, Cys-146/Cys-157, and Cys-149/Cys-165. N-linked (GlcNAc...) asparagine glycosylation occurs at Asn-118. Residues 172–192 (SDLPWLCLLLLLIPPIVYVVI) traverse the membrane as a helical segment. Over 193–331 (KKACRKHRKE…NFRNEIQSLV (139 aa)) the chain is Cytoplasmic. Residue Cys-196 is the site of S-palmitoyl cysteine attachment. The segment at 209-313 (STTLNPETAI…EKIHAVILKD (105 aa)) is interaction with HIPK3. Thr-211 carries the post-translational modification Phosphothreonine. Ser-221 is modified (phosphoserine). Residues 226–250 (SKYITTIAGAMTLSQVKDFVRKNGV) are interaction with CALM. The Death domain maps to 226–310 (SKYITTIAGA…TLAEKIHAVI (85 aa)). Thr-318 carries the phosphothreonine modification.

Component of the death-induced signaling complex (DISC) composed of cell surface receptor FAS/CD95, adapter protein FADD and the CASP8 protease; recruitment of CASP8 to the complex is required for processing of CASP8 into the p18 and p10 subunits. Interacts directly (via DED domain) with NOL3 (via CARD domain); inhibits death-inducing signaling complex (DISC) assembly by inhibiting the increase in FAS-FADD binding induced by FAS activation. Binds DAXX. Interacts with HIPK3. Part of a complex containing HIPK3 and FADD. Binds RIPK1 and FAIM2. Interacts with BABAM2 and FEM1B. Interacts with CALM. In the absence of stimulation, interacts with BIRC2, DDX3X and GSK3B. The interaction with BIRC2 and DDX3X is further enhanced upon receptor stimulation and accompanied by DDX3X and BIRC2 cleavage. Palmitoylated. Palmitoylation by ZDHHC7 prevents the lysosomal degradation of FAS regulating its expression at the plasma membrane.

The protein localises to the cell membrane. It is found in the membrane raft. Its function is as follows. Receptor for TNFSF6/FASLG. The adapter molecule FADD recruits caspase CASP8 to the activated receptor. The resulting death-inducing signaling complex (DISC) performs CASP8 proteolytic activation which initiates the subsequent cascade of caspases (aspartate-specific cysteine proteases) mediating apoptosis. FAS-mediated apoptosis may have a role in the induction of peripheral tolerance, in the antigen-stimulated suicide of mature T-cells, or both. The chain is Tumor necrosis factor receptor superfamily member 6 (FAS) from Macaca fascicularis (Crab-eating macaque).